A 242-amino-acid polypeptide reads, in one-letter code: MAFVVIPSVDVVEGKCVQLVEGDPERRTFESDDPVETAHQWSEFFPWIHVVDVDAARGEGDNSDIIGRICEEVDAKVQVGGGIRSAERAEELIELGADRLIVGTVAFTDKDDFSKIVDVCHDHGIEVFVALDVNENHEVLVSGWKEDAGVTLEDAIERFNEVADGYLTTAVHVEGKEMGIDEKVVEKSTGATDLPVLYAGGIASIKDVKRAKEAGAYGVVIGTALYHGDIDPVALLDLMEED.

The Proton acceptor role is filled by Asp-10. The active-site Proton donor is the Asp-132.

This sequence belongs to the HisA/HisF family.

The protein resides in the cytoplasm. The catalysed reaction is 1-(5-phospho-beta-D-ribosyl)-5-[(5-phospho-beta-D-ribosylamino)methylideneamino]imidazole-4-carboxamide = 5-[(5-phospho-1-deoxy-D-ribulos-1-ylimino)methylamino]-1-(5-phospho-beta-D-ribosyl)imidazole-4-carboxamide. It participates in amino-acid biosynthesis; L-histidine biosynthesis; L-histidine from 5-phospho-alpha-D-ribose 1-diphosphate: step 4/9. The chain is 1-(5-phosphoribosyl)-5-[(5-phosphoribosylamino)methylideneamino] imidazole-4-carboxamide isomerase from Methanopyrus kandleri (strain AV19 / DSM 6324 / JCM 9639 / NBRC 100938).